The primary structure comprises 154 residues: Anti-sigma-E factor RseA (154 aa).

At Thr-39 the chain carries Phosphothreonine; by PknB. The Zn(2+) site is built by His-66, Cys-70, and Cys-73. A disordered region spans residues 104 to 154 (SEIPRCPPEGPSKGSSGGSSQGPPDGAAAGFGDRFADGDGGNRGRQSRVRR). Low complexity predominate over residues 124-136 (QGPPDGAAAGFGD).

It belongs to the zinc-associated anti-sigma factor (ZAS) superfamily. In terms of assembly, interacts with cognate ECF RNA polymerase sigma factor SigE under reducing conditions; this inhibits the interaction of SigE with the RNA polymerase catalytic core. The cofactor is Zn(2+). Phosphorylated by PknB on Thr-39; can be dephosphorylated (at least in vitro) by PstP. Phosphorylation is the signal for subsequent degradation by the ClpC1-ClpP2 complex. Post-translationally, degraded following vancomycin treatment (surface stress) by a ClpC1-ClpP2 complex.

It localises to the cytoplasm. Functionally, an anti-sigma factor for extracytoplasmic function (ECF) sigma factor SigE. ECF sigma factors are held in an inactive form by an anti-sigma factor. This is Anti-sigma-E factor RseA (rseA) from Mycobacterium tuberculosis (strain ATCC 25618 / H37Rv).